The sequence spans 244 residues: tRNA (guanine-N(7)-)-methyltransferase (244 aa).

4 residues coordinate S-adenosyl-L-methionine: Glu75, Glu100, Asp127, and Asp150. Residue Asp150 is part of the active site. Residues Lys154, Asp186, and 223-226 (TRFE) each bind substrate.

It belongs to the class I-like SAM-binding methyltransferase superfamily. TrmB family.

The catalysed reaction is guanosine(46) in tRNA + S-adenosyl-L-methionine = N(7)-methylguanosine(46) in tRNA + S-adenosyl-L-homocysteine. It functions in the pathway tRNA modification; N(7)-methylguanine-tRNA biosynthesis. Its function is as follows. Catalyzes the formation of N(7)-methylguanine at position 46 (m7G46) in tRNA. The sequence is that of tRNA (guanine-N(7)-)-methyltransferase from Xylella fastidiosa (strain M12).